We begin with the raw amino-acid sequence, 689 residues long: Pentatricopeptide repeat-containing protein At2g03380, mitochondrial (689 aa).

The transit peptide at 1–12 (MLRSITLSPTRR) directs the protein to the mitochondrion. 16 PPR repeats span residues 75–105 (DISIATKLVSLYGFFGYTKDARLVFDQIPEP), 106–140 (DFYLWKVMLRCYCLNKESVEVVKLYDLLMKHGFRY), 141–171 (DDIVFSKALKACTELQDLDNGKKIHCQLVKV), 175–205 (DNVVLTGLLDMYAKCGEIKSAHKVFNDITLR), 206–240 (NVVCWTSMIAGYVKNDLCEEGLVLFNRMRENNVLG), 241–275 (NEYTYGTLIMACTKLSALHQGKWFHGCLVKSGIEL), 276–306 (SSCLVTSLLDMYVKCGDISNARRVFNEHSHV), 307–341 (DLVMWTAMIVGYTHNGSVNEALSLFQKMKGVEIKP), 342–372 (NCVTIASVLSGCGLIENLELGRSVHGLSIKV), 376–406 (DTNVANALVHMYAKCYQNRDAKYVFEMESEK), 407–441 (DIVAWNSIISGFSQNGSIHEALFLFHRMNSESVTP), 442–476 (NGVTVASLFSACASLGSLAVGSSLHAYSVKLGFLA), 479–509 (SVHVGTALLDFYAKCGDPQSARLIFDTIEEK), 510–544 (NTITWSAMIGGYGKQGDTIGSLELFEEMLKKQQKP), 545–580 (NESTFTSILSACGHTGMVNEGKKYFSSMYKDYNFTP), and 581–611 (STKHYTCMVDMLARAGELEQALDIIEKMPIQ). Positions 616–689 (CFGAFLHGCG…SKIAGHSTME (74 aa)) are type E motif; degenerate.

Belongs to the PPR family. PCMP-E subfamily.

It is found in the mitochondrion. This is Pentatricopeptide repeat-containing protein At2g03380, mitochondrial (PCMP-E47) from Arabidopsis thaliana (Mouse-ear cress).